The chain runs to 262 residues: Protein Pcal_0062 (262 aa).

It belongs to the CinA family.

The polypeptide is Protein Pcal_0062 (Pyrobaculum calidifontis (strain DSM 21063 / JCM 11548 / VA1)).